The chain runs to 550 residues: uncharacterized protein (550 aa).

The signal sequence occupies residues 1 to 53 (MVVIANKGALWAYYCKRLLNSVTYMMYPLIRKRTMKKLLLIVGLLLACSTVMR). N-linked (GlcNAc...) asparagine glycans are attached at residues Asn296 and Asn518.

Its subcellular location is the endoplasmic reticulum. This is an uncharacterized protein from Schizosaccharomyces pombe (strain 972 / ATCC 24843) (Fission yeast).